Consider the following 570-residue polypeptide: Rho GTPase-activating protein gacEE (570 aa).

The region spanning 127-233 (NSDISGVLLK…WVTTINNCID (107 aa)) is the PH domain. The region spanning 224–343 (WVTTINNCID…PNGSEISLWL (120 aa)) is the C2 domain. Residues aspartate 260, aspartate 266, aspartate 312, aspartate 314, and aspartate 320 each contribute to the Ca(2+) site. Residues 381 to 567 (NSLEAIVKNR…FVFENSQQIL (187 aa)) enclose the Rho-GAP domain.

Ca(2+) is required as a cofactor.

Its subcellular location is the cytoplasm. Rho GTPase-activating protein involved in the signal transduction pathway. The chain is Rho GTPase-activating protein gacEE (gacEE) from Dictyostelium discoideum (Social amoeba).